Here is a 657-residue protein sequence, read N- to C-terminus: Cyclic-di-AMP phosphodiesterase PdeA (657 aa).

The next 2 helical transmembrane spans lie at 13 to 35 and 37 to 53; these read PLYG…SWWL and ALVV…MFYF. Residues 74-137 form a PAS-like region; sequence RSEEEALVEM…ITGNDEKGIM (64 aa). Residues 175–303 form the GGDEF domain; that stretch reads NKSVFAVIFL…GGDQVVIKQP (129 aa). The interval 342-498 is DHH; sequence VFVMGHRYPD…IEATALLSGI (157 aa). Mn(2+)-binding residues include H347, D351, D353, D422, H446, and D501. Residues 592–645 are DHHA1; the sequence is VITLRPDKLIGISARSLGQINVQVIMEKLGGGGHLSNAATQLKDVTIAEAEKQL.

Belongs to the GdpP/PdeA phosphodiesterase family. Requires heme b as cofactor. Mn(2+) is required as a cofactor.

The protein resides in the cell membrane. The catalysed reaction is 3',3'-c-di-AMP + H2O = 5'-O-phosphonoadenylyl-(3'-&gt;5')-adenosine + H(+). Its function is as follows. Has phosphodiesterase (PDE) activity against cyclic-di-AMP (c-di-AMP). Overexpression decreases export of c-di-AMP, leads to slightly increased susceptibility to the antibiotic cefuroxime and somewhat slower growth in macrophages. There are at least 2 PDEs for c-di-AMP in this bacteria (this one and pgpH); this may be the major PDE for intracellular growth in host macrophages. During host infection c-di-AMP is secreted into the host cytoplasm which leads to interferon-beta production and secretion by the host. c-di-AMP is a second messenger that mediates growth, cell wall stability and virulence. May monitor cellular heme or NO levels. The protein is Cyclic-di-AMP phosphodiesterase PdeA of Listeria monocytogenes serotype 1/2a (strain 10403S).